Consider the following 275-residue polypeptide: Trans-aconitate 2-methyltransferase (275 aa).

The protein belongs to the methyltransferase superfamily. Tam family.

Its subcellular location is the cytoplasm. The catalysed reaction is trans-aconitate + S-adenosyl-L-methionine = (E)-3-(methoxycarbonyl)pent-2-enedioate + S-adenosyl-L-homocysteine. Catalyzes the S-adenosylmethionine monomethyl esterification of trans-aconitate. The chain is Trans-aconitate 2-methyltransferase from Pseudomonas aeruginosa (strain ATCC 15692 / DSM 22644 / CIP 104116 / JCM 14847 / LMG 12228 / 1C / PRS 101 / PAO1).